Consider the following 590-residue polypeptide: Cytosolic Fe-S cluster assembly factor nar1 (590 aa).

Cys-20 provides a ligand contact to [4Fe-4S] cluster. Residues 25 to 50 (ESLPQKQSNENPYEVTTEDKVQPENP) are disordered. 5 residues coordinate [4Fe-4S] cluster: Cys-60, Cys-63, Cys-66, Cys-204, and Cys-259. Residues 423 to 446 (PGAKVATGQTAGGRRQPISRNGAS) form a disordered region. [4Fe-4S] cluster is bound by residues Cys-461 and Cys-465.

This sequence belongs to the NARF family.

Functionally, component of the cytosolic Fe/S protein assembly machinery. Required for maturation of extramitochondrial Fe/S proteins. May play a role in the transfer of pre-assembled Fe/S clusters to target apoproteins. This Emericella nidulans (strain FGSC A4 / ATCC 38163 / CBS 112.46 / NRRL 194 / M139) (Aspergillus nidulans) protein is Cytosolic Fe-S cluster assembly factor nar1 (nar1).